Consider the following 162-residue polypeptide: Protein-export protein SecB (162 aa).

The protein belongs to the SecB family. As to quaternary structure, homotetramer, a dimer of dimers. One homotetramer interacts with 1 SecA dimer.

The protein resides in the cytoplasm. In terms of biological role, one of the proteins required for the normal export of preproteins out of the cell cytoplasm. It is a molecular chaperone that binds to a subset of precursor proteins, maintaining them in a translocation-competent state. It also specifically binds to its receptor SecA. The polypeptide is Protein-export protein SecB (Legionella pneumophila subsp. pneumophila (strain Philadelphia 1 / ATCC 33152 / DSM 7513)).